The following is a 405-amino-acid chain: Tyrosine--tRNA ligase (405 aa).

An L-tyrosine-binding site is contributed by Y35. The 'HIGH' region motif lies at 40–49; it reads ATSSSLHIGH. L-tyrosine contacts are provided by Y166 and Q170. Positions 226–230 match the 'KMSKS' region motif; it reads KMGKS. K229 provides a ligand contact to ATP. The region spanning 340–405 is the S4 RNA-binding domain; sequence ILLVDLMLDS…GKKKFLRIVI (66 aa).

The protein belongs to the class-I aminoacyl-tRNA synthetase family. TyrS type 1 subfamily. Homodimer.

The protein localises to the cytoplasm. It catalyses the reaction tRNA(Tyr) + L-tyrosine + ATP = L-tyrosyl-tRNA(Tyr) + AMP + diphosphate + H(+). Functionally, catalyzes the attachment of tyrosine to tRNA(Tyr) in a two-step reaction: tyrosine is first activated by ATP to form Tyr-AMP and then transferred to the acceptor end of tRNA(Tyr). The sequence is that of Tyrosine--tRNA ligase from Borreliella burgdorferi (strain ATCC 35210 / DSM 4680 / CIP 102532 / B31) (Borrelia burgdorferi).